A 1060-amino-acid polypeptide reads, in one-letter code: Carbamoyl phosphate synthase large chain (1060 aa).

The interval 1 to 401 (MPKRTDIRKI…SLLKAVRSLE (401 aa)) is carboxyphosphate synthetic domain. Residues arginine 129, arginine 169, glycine 175, glycine 176, glutamine 208, isoleucine 210, glutamate 215, glycine 241, isoleucine 242, histidine 243, glutamine 284, and glutamate 298 each coordinate ATP. One can recognise an ATP-grasp 1 domain in the interval 133-327 (KNLMNQLNEP…IAKMAAKIAV (195 aa)). Positions 284, 298, and 300 each coordinate Mg(2+). Mn(2+) contacts are provided by glutamine 284, glutamate 298, and asparagine 300. An oligomerization domain region spans residues 402–546 (IGTAHLELDG…YTTYEQENES (145 aa)). Positions 547–929 (LVSAKPSILV…ALYKAFEASG (383 aa)) are carbamoyl phosphate synthetic domain. Residues 671–861 (DQLIQELNIP…MAQLATQLIL (191 aa)) enclose the ATP-grasp 2 domain. ATP contacts are provided by arginine 707, arginine 746, leucine 748, glutamate 752, glycine 777, valine 778, histidine 779, serine 780, glutamine 820, and glutamate 832. Residues glutamine 820, glutamate 832, and asparagine 834 each coordinate Mg(2+). 3 residues coordinate Mn(2+): glutamine 820, glutamate 832, and asparagine 834. One can recognise an MGS-like domain in the interval 930-1060 (MHLPSHGNVL…ESQSLLTKPL (131 aa)). The segment at 930–1060 (MHLPSHGNVL…ESQSLLTKPL (131 aa)) is allosteric domain.

It belongs to the CarB family. In terms of assembly, composed of two chains; the small (or glutamine) chain promotes the hydrolysis of glutamine to ammonia, which is used by the large (or ammonia) chain to synthesize carbamoyl phosphate. Tetramer of heterodimers (alpha,beta)4. Mg(2+) is required as a cofactor. It depends on Mn(2+) as a cofactor.

The catalysed reaction is hydrogencarbonate + L-glutamine + 2 ATP + H2O = carbamoyl phosphate + L-glutamate + 2 ADP + phosphate + 2 H(+). It carries out the reaction hydrogencarbonate + NH4(+) + 2 ATP = carbamoyl phosphate + 2 ADP + phosphate + 2 H(+). The protein operates within amino-acid biosynthesis; L-arginine biosynthesis; carbamoyl phosphate from bicarbonate: step 1/1. It functions in the pathway pyrimidine metabolism; UMP biosynthesis via de novo pathway; (S)-dihydroorotate from bicarbonate: step 1/3. Functionally, large subunit of the glutamine-dependent carbamoyl phosphate synthetase (CPSase). CPSase catalyzes the formation of carbamoyl phosphate from the ammonia moiety of glutamine, carbonate, and phosphate donated by ATP, constituting the first step of 2 biosynthetic pathways, one leading to arginine and/or urea and the other to pyrimidine nucleotides. The large subunit (synthetase) binds the substrates ammonia (free or transferred from glutamine from the small subunit), hydrogencarbonate and ATP and carries out an ATP-coupled ligase reaction, activating hydrogencarbonate by forming carboxy phosphate which reacts with ammonia to form carbamoyl phosphate. This Latilactobacillus sakei subsp. sakei (strain 23K) (Lactobacillus sakei subsp. sakei) protein is Carbamoyl phosphate synthase large chain.